The chain runs to 192 residues: Elongation factor P (192 aa).

The protein belongs to the elongation factor P family.

The protein resides in the cytoplasm. It participates in protein biosynthesis; polypeptide chain elongation. Its function is as follows. Involved in peptide bond synthesis. Stimulates efficient translation and peptide-bond synthesis on native or reconstituted 70S ribosomes in vitro. Probably functions indirectly by altering the affinity of the ribosome for aminoacyl-tRNA, thus increasing their reactivity as acceptors for peptidyl transferase. The chain is Elongation factor P from Borrelia duttonii (strain Ly).